The chain runs to 479 residues: Spindly-like protein spdl-1 (479 aa).

3 coiled-coil regions span residues 4–180 (DEEK…EGEL), 210–250 (EEDL…RFNV), and 321–357 (LMKD…KCAH).

In terms of assembly, interacts with Zwilch homolog zwl-1, a component of the RZZ complex. Interacts with mdf-1 and mdf-2.

The protein localises to the chromosome. The protein resides in the centromere. It is found in the kinetochore. It localises to the cytoplasm. Its subcellular location is the cytoskeleton. The protein localises to the spindle pole. Functionally, transient kinetochore component required for chromosome and spindle pole alignment and chromosome segregation during mitosis. Functions downstream of the RZZ complex to mediate kinetochore-microtubule attachments and nuclear envelope breakdown during cell division. Required for kinetochore assembly and localizes the checkpoint proteins mdf-1 and mdf-2, dynein and dynactin to unattached kinetochores. Dynein is believed to control the initial lateral interaction between the kinetochore and spindle microtubules and to facilitate the subsequent formation of end-on kinetochore-microtubule attachments mediated by the NDC80 complex. Required for embryonic development. In Caenorhabditis elegans, this protein is Spindly-like protein spdl-1.